The chain runs to 417 residues: Mitochondrial tRNA-specific 2-thiouridylase 1 (417 aa).

Residues 32 to 39 (AMSSGVDS) and Met58 contribute to the ATP site. Residues 122 to 124 (NPD) form an interaction with target base in tRNA region. Catalysis depends on Cys127, which acts as the Nucleophile. Cys127 and Cys229 are joined by a disulfide. Gly154 serves as a coordination point for ATP. An interaction with tRNA region spans residues 179-181 (KDQ). The active-site Cysteine persulfide intermediate is the Cys229. An interaction with tRNA region spans residues 354 to 355 (RS).

It belongs to the MnmA/TRMU family.

It localises to the mitochondrion. The catalysed reaction is 5-taurinomethyluridine(34) in tRNA + S-sulfanyl-L-cysteinyl-[protein] + AH2 + ATP = 5-taurinomethyl-2-thiouridine(34) in tRNA + L-cysteinyl-[protein] + A + AMP + diphosphate + H(+). Functionally, catalyzes the 2-thiolation of uridine at the wobble position (U34) of mitochondrial tRNA(Lys), tRNA(Glu) and tRNA(Gln). Required for the formation of 5-taurinomethyl-2-thiouridine (tm5s2U) of mitochondrial tRNA(Lys), tRNA(Glu), and tRNA(Gln) at the wobble position. ATP is required to activate the C2 atom of the wobble base. The protein is Mitochondrial tRNA-specific 2-thiouridylase 1 (SLM3) of Saccharomyces cerevisiae (strain ATCC 204508 / S288c) (Baker's yeast).